Here is a 470-residue protein sequence, read N- to C-terminus: MSTGRIIQITGPVVDVKFPSGQLPEINNALTVNQQGAADGAVDVKVTLEVALHLGNDTVRTVAMGSTDGLMRGTEVLDTGGPISVPVGEATLGRVFNVLGEEIDLQEPVAEGTRRDPIHREAPSFEELTTTTEILETGIKVVDLLAPYTKGGKIGLFGGAGVGKTVLIQELINNVALEHGGISVFAGVGERTREGNDLYHEMKDAGVITKTAMVFGQMNEPPGARMRVALTGLTMAEYFRDEQGADVLLFIDNIFRFTQAGSEVSALLGRMPSAVGYQPTLATEMGQLQERITSTKKGSVTSIQAIYVPADDYTDPAPATTFAHLDATTNLERKLTEQGIYPAVDPLASTSRALSPEIVGEEHYNVARGVQQTLQKYRELQDIIAILGMEELSEEDKLIVARARRIQFFLSQNFHVAEQFTGQPGSYVPVKETIQGFKDILAGKYDDLPEDAFRLVGRIEEVVEKAKQMA.

158 to 165 (GGAGVGKT) contributes to the ATP binding site.

This sequence belongs to the ATPase alpha/beta chains family. As to quaternary structure, F-type ATPases have 2 components, CF(1) - the catalytic core - and CF(0) - the membrane proton channel. CF(1) has five subunits: alpha(3), beta(3), gamma(1), delta(1), epsilon(1). CF(0) has three main subunits: a(1), b(2) and c(9-12). The alpha and beta chains form an alternating ring which encloses part of the gamma chain. CF(1) is attached to CF(0) by a central stalk formed by the gamma and epsilon chains, while a peripheral stalk is formed by the delta and b chains.

The protein resides in the cell membrane. It carries out the reaction ATP + H2O + 4 H(+)(in) = ADP + phosphate + 5 H(+)(out). In terms of biological role, produces ATP from ADP in the presence of a proton gradient across the membrane. The catalytic sites are hosted primarily by the beta subunits. This Shouchella clausii (strain KSM-K16) (Alkalihalobacillus clausii) protein is ATP synthase subunit beta.